Here is a 197-residue protein sequence, read N- to C-terminus: MLVLPSPCPQPLAFSSVETMEGPPRRTCRSPEPGPSSSIGSPQASSPPRPNHYLLIDTQGVPYTVLVDEESQREPGASGAPGQKKCYSCPVCSRVFEYMSYLQRHSITHSEVKPFECDICGKAFKRASHLARHHSIHLAGGGRPHGCPLCPRRFRDAGELAQHSRVHSGERPFQCPHCPRRFMEQNTLQKHTRWKHP.

A compositionally biased stretch (pro residues) spans 1–10; the sequence is MLVLPSPCPQ. The segment at 1 to 52 is disordered; it reads MLVLPSPCPQPLAFSSVETMEGPPRRTCRSPEPGPSSSIGSPQASSPPRPNH. The span at 35-44 shows a compositional bias: low complexity; the sequence is PSSSIGSPQA. 4 consecutive C2H2-type zinc fingers follow at residues 87–109, 115–137, 145–167, and 173–196; these read YSCPVCSRVFEYMSYLQRHSITH, FECDICGKAFKRASHLARHHSIH, HGCPLCPRRFRDAGELAQHSRVH, and FQCPHCPRRFMEQNTLQKHTRWKH.

The protein localises to the nucleus. Functionally, may be involved in transcriptional regulation. The chain is Zinc finger protein 581 (ZNF581) from Homo sapiens (Human).